We begin with the raw amino-acid sequence, 730 residues long: ATP-dependent DNA helicase Hel308 (730 aa).

ATP-binding positions include Q28 and 46–53 (IPTASGKT). The region spanning 33–199 (EKGLLEGKNL…WLDAELVLSE (167 aa)) is the Helicase ATP-binding domain. The DEAH box motif lies at 144–147 (DEVH). A Helicase C-terminal domain is found at 232–433 (AVNLVLDTIK…ALRTHILSTI (202 aa)).

The protein belongs to the helicase family. Hel308 subfamily. As to quaternary structure, monomer.

The catalysed reaction is Couples ATP hydrolysis with the unwinding of duplex DNA by translocating in the 3'-5' direction.. It carries out the reaction ATP + H2O = ADP + phosphate + H(+). In terms of biological role, DNA-dependent ATPase and 3'-5' DNA helicase that may be involved in repair of stalled replication forks. In Methanosarcina mazei (strain ATCC BAA-159 / DSM 3647 / Goe1 / Go1 / JCM 11833 / OCM 88) (Methanosarcina frisia), this protein is ATP-dependent DNA helicase Hel308.